The following is a 297-amino-acid chain: Phosphatidylinositol N-acetylglucosaminyltransferase subunit C (297 aa).

Transmembrane regions (helical) follow at residues Val-51–Ile-71, Leu-80–Phe-100, Trp-117–Leu-137, Ser-153–Val-173, Ser-174–Pro-194, Ser-196–Leu-216, Ser-227–Leu-244, and Gly-250–Ile-270.

Belongs to the PIGC family. As to quaternary structure, component of the glycosylphosphatidylinositol-N-acetylglucosaminyltransferase (GPI-GnT) complex composed at least by PIGA, PIGC, PIGH, PIGP, PIGQ, PIGY and DPM2. Interacts with PIGQ. Interacts with the heterodimer PIGA:PIGH.

The protein localises to the endoplasmic reticulum membrane. Its pathway is glycolipid biosynthesis; glycosylphosphatidylinositol-anchor biosynthesis. Part of the glycosylphosphatidylinositol-N-acetylglucosaminyltransferase (GPI-GnT) complex that catalyzes the transfer of N-acetylglucosamine from UDP-N-acetylglucosamine to phosphatidylinositol and participates in the first step of GPI biosynthesis. In Homo sapiens (Human), this protein is Phosphatidylinositol N-acetylglucosaminyltransferase subunit C.